The following is a 227-amino-acid chain: PKHD-type hydroxylase Bphyt_7102 (227 aa).

In terms of domain architecture, Fe2OG dioxygenase spans 80–179 (QVYPPLFNRY…RIASFFWVQS (100 aa)). Residues histidine 98, aspartate 100, and histidine 160 each coordinate Fe cation. Arginine 170 lines the 2-oxoglutarate pocket.

It depends on Fe(2+) as a cofactor. L-ascorbate serves as cofactor.

The polypeptide is PKHD-type hydroxylase Bphyt_7102 (Paraburkholderia phytofirmans (strain DSM 17436 / LMG 22146 / PsJN) (Burkholderia phytofirmans)).